We begin with the raw amino-acid sequence, 89 residues long: Small ribosomal subunit protein uS15 (89 aa).

Belongs to the universal ribosomal protein uS15 family. As to quaternary structure, part of the 30S ribosomal subunit. Forms a bridge to the 50S subunit in the 70S ribosome, contacting the 23S rRNA.

In terms of biological role, one of the primary rRNA binding proteins, it binds directly to 16S rRNA where it helps nucleate assembly of the platform of the 30S subunit by binding and bridging several RNA helices of the 16S rRNA. Forms an intersubunit bridge (bridge B4) with the 23S rRNA of the 50S subunit in the ribosome. This chain is Small ribosomal subunit protein uS15, found in Chromohalobacter salexigens (strain ATCC BAA-138 / DSM 3043 / CIP 106854 / NCIMB 13768 / 1H11).